Consider the following 97-residue polypeptide: Co-chaperonin GroES (97 aa).

The protein belongs to the GroES chaperonin family. Heptamer of 7 subunits arranged in a ring. Interacts with the chaperonin GroEL.

It localises to the cytoplasm. Together with the chaperonin GroEL, plays an essential role in assisting protein folding. The GroEL-GroES system forms a nano-cage that allows encapsulation of the non-native substrate proteins and provides a physical environment optimized to promote and accelerate protein folding. GroES binds to the apical surface of the GroEL ring, thereby capping the opening of the GroEL channel. This chain is Co-chaperonin GroES, found in Stenotrophomonas maltophilia (Pseudomonas maltophilia).